A 452-amino-acid chain; its full sequence is Probable ECA polymerase (452 aa).

11 helical membrane-spanning segments follow: residues Phe-6 to Phe-26, Val-37 to Leu-57, Val-63 to Gly-83, Val-118 to Leu-138, Gly-155 to Leu-175, Ala-181 to Gly-201, Ile-207 to Trp-227, Met-228 to Tyr-248, Leu-341 to Ile-361, Tyr-378 to Ala-398, and Val-410 to Phe-430.

Belongs to the WzyE family. As to quaternary structure, probably part of a complex composed of WzxE, WzyE and WzzE.

The protein localises to the cell inner membrane. It functions in the pathway bacterial outer membrane biogenesis; enterobacterial common antigen biosynthesis. In terms of biological role, probably involved in the polymerization of enterobacterial common antigen (ECA) trisaccharide repeat units. This chain is Probable ECA polymerase, found in Salmonella heidelberg (strain SL476).